Reading from the N-terminus, the 62-residue chain is Small ribosomal subunit protein eS27 (62 aa).

Zn(2+)-binding residues include cysteine 17, cysteine 20, cysteine 36, and cysteine 39. The C4-type zinc-finger motif lies at 17–39; the sequence is CPDCENEQLVFEKATSVVECTVC.

Belongs to the eukaryotic ribosomal protein eS27 family. As to quaternary structure, part of the 30S ribosomal subunit. Zn(2+) is required as a cofactor.

The chain is Small ribosomal subunit protein eS27 from Methanocorpusculum labreanum (strain ATCC 43576 / DSM 4855 / Z).